A 210-amino-acid chain; its full sequence is Large ribosomal subunit protein bL25 (210 aa).

The segment at L179–G210 is disordered. Positions E201–G210 are enriched in basic and acidic residues.

It belongs to the bacterial ribosomal protein bL25 family. CTC subfamily. In terms of assembly, part of the 50S ribosomal subunit; part of the 5S rRNA/L5/L18/L25 subcomplex. Contacts the 5S rRNA. Binds to the 5S rRNA independently of L5 and L18.

Its function is as follows. This is one of the proteins that binds to the 5S RNA in the ribosome where it forms part of the central protuberance. In Geobacillus thermodenitrificans (strain NG80-2), this protein is Large ribosomal subunit protein bL25.